A 718-amino-acid chain; its full sequence is Catalase-peroxidase (718 aa).

Residues 98-219 constitute a cross-link (tryptophyl-tyrosyl-methioninium (Trp-Tyr) (with M-245)); the sequence is WHAAGTYRMG…LAATEMGLIY (122 aa). His-99 functions as the Proton acceptor in the catalytic mechanism. The segment at residues 219–245 is a cross-link (tryptophyl-tyrosyl-methioninium (Tyr-Met) (with W-98)); that stretch reads YVNPEGPQASGDPRSAAPFIRATFGNM. Position 260 (His-260) interacts with heme b.

Belongs to the peroxidase family. Peroxidase/catalase subfamily. In terms of assembly, homodimer or homotetramer. Heme b is required as a cofactor. Post-translationally, formation of the three residue Trp-Tyr-Met cross-link is important for the catalase, but not the peroxidase activity of the enzyme.

It carries out the reaction H2O2 + AH2 = A + 2 H2O. It catalyses the reaction 2 H2O2 = O2 + 2 H2O. Bifunctional enzyme with both catalase and broad-spectrum peroxidase activity. In Acinetobacter baumannii (strain AB307-0294), this protein is Catalase-peroxidase.